A 209-amino-acid polypeptide reads, in one-letter code: MADYLLNALQWIDGLGTWAAIAFMLLYTVATVVFLPGSILTLGAGVVFGVILGSIYVFIGATLGATAAFLVGRYLARGWVAKKIAGNQKFKAIDEAVGKEGLKIVILTRLSPVFPFNLLNYAYGITNVSLKDYVIGSLGMIPGTIMYVYIGSLAGSLATLGTATNQANPTLQWTIRIVGFIATVAVTIYVTKIARKALNEAILTSEVDE.

Helical transmembrane passes span 15–35, 39–59, 110–130, 134–154, and 171–191; these read LGTW…VVFL, ILTL…YVFI, LSPV…NVSL, VIGS…GSLA, and LQWT…IYVT.

Belongs to the TVP38/TMEM64 family.

The protein resides in the cell membrane. The sequence is that of TVP38/TMEM64 family membrane protein slr0305 from Synechocystis sp. (strain ATCC 27184 / PCC 6803 / Kazusa).